The chain runs to 488 residues: ATP synthase subunit beta (488 aa).

164–171 lines the ATP pocket; the sequence is GGAGVGKT.

This sequence belongs to the ATPase alpha/beta chains family. As to quaternary structure, F-type ATPases have 2 components, CF(1) - the catalytic core - and CF(0) - the membrane proton channel. CF(1) has five subunits: alpha(3), beta(3), gamma(1), delta(1), epsilon(1). CF(0) has four main subunits: a(1), b(1), b'(1) and c(9-12).

It localises to the cellular thylakoid membrane. It catalyses the reaction ATP + H2O + 4 H(+)(in) = ADP + phosphate + 5 H(+)(out). Functionally, produces ATP from ADP in the presence of a proton gradient across the membrane. The catalytic sites are hosted primarily by the beta subunits. This Prochlorococcus marinus (strain MIT 9303) protein is ATP synthase subunit beta.